The following is a 489-amino-acid chain: uncharacterized protein (489 aa).

Transmembrane regions (helical) follow at residues 29 to 49 (FIAS…TGLG), 67 to 87 (LLYA…KYLG), 90 to 110 (WALA…WYFD), 119 to 139 (IFTG…TAYI), 152 to 172 (FIAT…FIAF), 186 to 206 (AVYI…ILFI), 276 to 296 (LNNV…TLIL), 308 to 328 (IIGL…ELGW), 351 to 371 (GGAL…IVSV), 397 to 417 (AAGM…LGQG), and 418 to 438 (IIYF…TSIF).

The protein localises to the membrane. This is an uncharacterized protein from Schizosaccharomyces pombe (strain 972 / ATCC 24843) (Fission yeast).